Reading from the N-terminus, the 120-residue chain is NADH-quinone oxidoreductase subunit A (120 aa).

3 helical membrane passes run 6–26 (YGIIAVFLVGGAATAVAALAT), 63–83 (FLYALVFLLFDVETVFLYPWA), and 89–109 (LGLFAFAEMIVFIGILVLGLW).

It belongs to the complex I subunit 3 family. In terms of assembly, NDH-1 is composed of 14 different subunits. Subunits NuoA, H, J, K, L, M, N constitute the membrane sector of the complex.

It localises to the cell membrane. The catalysed reaction is a quinone + NADH + 5 H(+)(in) = a quinol + NAD(+) + 4 H(+)(out). In terms of biological role, NDH-1 shuttles electrons from NADH, via FMN and iron-sulfur (Fe-S) centers, to quinones in the respiratory chain. The immediate electron acceptor for the enzyme in this species is believed to be a menaquinone. Couples the redox reaction to proton translocation (for every two electrons transferred, four hydrogen ions are translocated across the cytoplasmic membrane), and thus conserves the redox energy in a proton gradient. The sequence is that of NADH-quinone oxidoreductase subunit A from Moorella thermoacetica (strain ATCC 39073 / JCM 9320).